Reading from the N-terminus, the 303-residue chain is MSNKLTFQEIILTLQQYWNDQGCMLMQAYDNEKGAGTMSPYTFLRAIGPEPWNAAYVEPSRRPADGRYGENPNRLYQHHQFQVVMKPSPSNIQELYLQSLERLGIDPLEHDIRFVEDNWENPSTGSAGLGWEVWLDGMEITQFTYFQQVGGLATSPVTAEVTYGLERLASYIQEVDSVYDIEWAPGVKYGEIFLQPEYEHSKYSFEVSNQDMLLENFEIFEKEAERALAQGLVHPAYDYVLKCSHTFNLLDARGAVSVTERAGYIARIRHLARSVAKTFVAERKKLGFPLLDDASRVALLAED.

The protein belongs to the class-II aminoacyl-tRNA synthetase family. In terms of assembly, tetramer of two alpha and two beta subunits.

It is found in the cytoplasm. The catalysed reaction is tRNA(Gly) + glycine + ATP = glycyl-tRNA(Gly) + AMP + diphosphate. This Streptococcus equi subsp. equi (strain 4047) protein is Glycine--tRNA ligase alpha subunit.